We begin with the raw amino-acid sequence, 609 residues long: Pentatricopeptide repeat-containing protein At1g03540 (609 aa).

PPR repeat units lie at residues 25-59, 60-94, 95-126, 127-161, 162-196, 197-227, 228-263, 264-298, 299-329, 330-364, 396-426, 427-461, 462-497, and 498-532; these read SAPT…EIPA, TPKL…GLET, DRNV…RFVK, DAIS…GLDA, NEFT…GFEW, NHFI…MPEP, DVIC…GLVP, DGST…GIGS, NVVV…MSKK, NSVS…DLYC, NVIV…MSIR, NMIT…GIKP, DYIS…GIKP, and GTEH…NDAS. A type E motif region spans residues 533–609; it reads LWGVLLGPCA…TVGQSWIDAH (77 aa).

It belongs to the PPR family. PCMP-E subfamily.

The chain is Pentatricopeptide repeat-containing protein At1g03540 (PCMP-E4) from Arabidopsis thaliana (Mouse-ear cress).